A 530-amino-acid chain; its full sequence is T-box transcription factor TBX21 (530 aa).

The tract at residues 1–55 is disordered; the sequence is MGIVEPGCGDMLTGTEPMPSDEGRGPGADQQHRFFYPEPGAQDPTDRRAGSSLGT. Serine 52 bears the Phosphoserine mark. Threonine 55 is subject to Phosphothreonine. A phosphotyrosine mark is found at tyrosine 76 and tyrosine 117. The segment at residues 140-325 is a DNA-binding region (T-box); sequence LSNHLLWSKF…NNPFAKGFRE (186 aa). Tyrosine 219 bears the Phosphotyrosine; by ABL1 mark. Serine 224 bears the Phosphoserine mark. The residue at position 265 (tyrosine 265) is a Phosphotyrosine; by ABL1. Threonine 302 carries the phosphothreonine modification. Position 304 is a phosphotyrosine; by ABL1 (tyrosine 304). A Glycyl lysine isopeptide (Lys-Gly) (interchain with G-Cter in ubiquitin) cross-link involves residue lysine 313. The segment at 444-530 is disordered; that stretch reads AGWFRPMRTL…EGQFYNYFPN (87 aa). Positions 462-482 are enriched in polar residues; sequence SEEQGSSPSLWPEVTSLQPEP. A compositionally biased stretch (low complexity) spans 498-515; sequence SPYPSSGDSSSPAGAPSP. The residue at position 508 (serine 508) is a Phosphoserine. The residue at position 525 (tyrosine 525) is a Phosphotyrosine; by ITK.

Interacts with RUNX1 and RUNX3. Interacts with ITK. The phosphorylated form (at Tyr-525) interacts with GATA3. Interacts with ABL1. Interacts with RELA. The phosphorylated form (at Thr-302) interacts with NFATC2. Interacts with KDM6B. Interacts with SMARCA4 in a KDM6B-dependent manner. Interacts with CCTN1 and CDK9. Interacts with USP10. Post-translationally, phosphorylations at Ser-52, Tyr-76, Ser-224 and Ser-508 are regulated by mTORC1. Phosphorylation at Tyr-525 is essential for its interaction GATA3. Phosphorylation at Tyr-219, Tyr-265 and Tyr-304 enhances its transcriptional activator activity. Phosphorylation at Thr-302 is required for its interaction with NFATC2. Ubiquitinated at Lys-313, leading to its degradation by the proteasome. Ubiquitination is essential for controlling protein stability, binding to the T-box-binding element of the IFN-gamma promoter, and for interaction with NFATC2 through induction of phosphorylation at Thr-302. Deubiquitinated by USP10 leading to its stabilization. As to expression, T-cell specific. Expressed in regulatory T (TReg) cells.

The protein localises to the nucleus. Lineage-defining transcription factor which initiates Th1 lineage development from naive Th precursor cells both by activating Th1 genetic programs and by repressing the opposing Th2 and Th17 genetic programs. Activates transcription of a set of genes important for Th1 cell function, including those encoding IFN-gamma and the chemokine receptor CXCR3. Activates IFNG and CXCR3 genes in part by recruiting chromatin remodeling complexes including KDM6B, a SMARCA4-containing SWI/SNF-complex, and an H3K4me2-methyltransferase complex to their promoters and all of these complexes serve to establish a more permissive chromatin state conducive with transcriptional activation. Can activate Th1 genes also via recruitment of Mediator complex and P-TEFb (composed of CDK9 and CCNT1/cyclin-T1) in the form of the super elongation complex (SEC) to super-enhancers and associated genes in activated Th1 cells. Inhibits the Th17 cell lineage commitment by blocking RUNX1-mediated transactivation of Th17 cell-specific transcriptinal regulator RORC. Inhibits the Th2 cell lineage commitment by suppressing the production of Th2 cytokines, such as IL-4, IL-5, and IL- 13, via repression of transcriptional regulators GATA3 and NFATC2. Protects Th1 cells from amplifying aberrant type-I IFN response in an IFN-gamma abundant microenvironment by acting as a repressor of type-I IFN transcription factors and type-I IFN- stimulated genes. Acts as a regulator of antiviral B-cell responses; controls chronic viral infection by promoting the antiviral antibody IgG2a isotype switching and via regulation of a broad antiviral gene expression program. This is T-box transcription factor TBX21 (Tbx21) from Mus musculus (Mouse).